We begin with the raw amino-acid sequence, 558 residues long: Pentatricopeptide repeat-containing protein At1g06140, mitochondrial (558 aa).

The transit peptide at 1–79 (MLPVNRARAL…RNRHSWNTIL (79 aa)) directs the protein to the mitochondrion. 13 PPR repeats span residues 38–68 (EVVL…IPCW), 71–103 (NRHS…MRRH), 108–142 (DSFN…GLDK), 143–173 (DDYV…IPVR), 174–208 (NSVL…GLAL), 209–243 (DALT…SFID), 245–275 (SDYL…SVDR), 276–310 (NVVM…SILP), 311–345 (NQCT…GIEM), 346–376 (DAVN…MPER), 377–411 (NVIS…NVVP), 412–447 (NSVT…GVVP), and 448–482 (EEEH…PMAS). The type E motif stretch occupies residues 483-558 (AWGALLSACR…HVGQSATEVG (76 aa)).

This sequence belongs to the PPR family. PCMP-E subfamily.

Its subcellular location is the mitochondrion. The polypeptide is Pentatricopeptide repeat-containing protein At1g06140, mitochondrial (PCMP-E61) (Arabidopsis thaliana (Mouse-ear cress)).